A 354-amino-acid polypeptide reads, in one-letter code: Serum paraoxonase/lactonase 3 (354 aa).

Cysteines 42 and 352 form a disulfide. A glycan (N-linked (GlcNAc...) asparagine) is linked at asparagine 50. Residues glutamate 53 and aspartate 54 each coordinate Ca(2+). Catalysis depends on histidine 114, which acts as the Proton acceptor. Position 116 (isoleucine 116) interacts with Ca(2+). Serine 165 carries the post-translational modification Phosphoserine. Ca(2+) is bound by residues asparagine 167, asparagine 168, asparagine 223, aspartate 268, and asparagine 269. N-linked (GlcNAc...) asparagine glycosylation occurs at asparagine 269.

This sequence belongs to the paraoxonase family. In terms of assembly, homodimer. Ca(2+) is required as a cofactor. Post-translationally, glycosylated. The signal sequence is not cleaved.

It is found in the secreted. The protein resides in the extracellular space. It catalyses the reaction a phenyl acetate + H2O = a phenol + acetate + H(+). The enzyme catalyses An aryl dialkyl phosphate + H2O = dialkyl phosphate + an aryl alcohol.. The catalysed reaction is an N-acyl-L-homoserine lactone + H2O = an N-acyl-L-homoserine + H(+). Functionally, has low activity towards the organophosphate paraxon and aromatic carboxylic acid esters. Rapidly hydrolyzes lactones such as statin prodrugs (e.g. lovastatin). Hydrolyzes aromatic lactones and 5- or 6-member ring lactones with aliphatic substituents but not simple lactones or those with polar substituents. The chain is Serum paraoxonase/lactonase 3 (PON3) from Oryctolagus cuniculus (Rabbit).